A 212-amino-acid polypeptide reads, in one-letter code: Dephospho-CoA kinase (212 aa).

In terms of domain architecture, DPCK spans Leu-8–Arg-212. Gly-16–Met-21 contacts ATP.

It belongs to the CoaE family.

The protein resides in the cytoplasm. The enzyme catalyses 3'-dephospho-CoA + ATP = ADP + CoA + H(+). Its pathway is cofactor biosynthesis; coenzyme A biosynthesis; CoA from (R)-pantothenate: step 5/5. Catalyzes the phosphorylation of the 3'-hydroxyl group of dephosphocoenzyme A to form coenzyme A. This chain is Dephospho-CoA kinase, found in Chlorobium chlorochromatii (strain CaD3).